A 70-amino-acid chain; its full sequence is Large ribosomal subunit protein bL31 (70 aa).

Zn(2+) is bound by residues C16, C18, C37, and C40.

This sequence belongs to the bacterial ribosomal protein bL31 family. Type A subfamily. In terms of assembly, part of the 50S ribosomal subunit. Zn(2+) is required as a cofactor.

Its function is as follows. Binds the 23S rRNA. This chain is Large ribosomal subunit protein bL31, found in Salmonella agona (strain SL483).